Reading from the N-terminus, the 628-residue chain is Eukaryotic peptide chain release factor GTP-binding subunit ERF3B (628 aa).

Low complexity predominate over residues 1–10 (MDSGSSSSDS). Disordered stretches follow at residues 1–49 (MDSG…SAFS), 72–124 (FLRG…LEGS), and 146–195 (LEES…VIVP). Residues 201–425 (KEHVNVVFIG…YLDNLPNFNR (225 aa)) form the tr-type G domain. Residues 210-217 (GHVDAGKS) are G1. A GTP-binding site is contributed by 213–218 (DAGKST). The tract at residues 266–270 (GKTVE) is G2. A G3 region spans residues 287-290 (DAPG). GTP contacts are provided by residues 349–352 (NKMD) and 391–393 (SGL). Positions 349-352 (NKMD) are G4. Positions 391–393 (SGL) are G5.

Belongs to the TRAFAC class translation factor GTPase superfamily. Classic translation factor GTPase family. ERF3 subfamily. Component of the eRF1-eRF3-GTP ternary complex, composed of ETF1/ERF1 and ERF3 (GSPT1/ERF3A or GSPT2/ERF3B) and GTP. Component of the transient SURF (SMG1-UPF1-eRF1-eRF3) complex. Interacts with UPF1 and PABPC1. In terms of tissue distribution, highly expressed in IUCC stage II colorectal cancer (CRC).

The protein resides in the cytoplasm. It carries out the reaction GTP + H2O = GDP + phosphate + H(+). GTPase component of the eRF1-eRF3-GTP ternary complex, a ternary complex that mediates translation termination in response to the termination codons UAA, UAG and UGA. GSPT2/ERF3B mediates ETF1/ERF1 delivery to stop codons: The eRF1-eRF3-GTP complex binds to a stop codon in the ribosomal A-site. GTP hydrolysis by GSPT2/ERF3B induces a conformational change that leads to its dissociation, permitting ETF1/ERF1 to accommodate fully in the A-site. Component of the transient SURF complex which recruits UPF1 to stalled ribosomes in the context of nonsense-mediated decay (NMD) of mRNAs containing premature stop codons. This is Eukaryotic peptide chain release factor GTP-binding subunit ERF3B (GSPT2) from Homo sapiens (Human).